We begin with the raw amino-acid sequence, 193 residues long: Hypoxanthine/guanine phosphoribosyltransferase (193 aa).

The protein belongs to the purine/pyrimidine phosphoribosyltransferase family. Archaeal HPRT subfamily. In terms of assembly, homodimer.

The protein resides in the cytoplasm. The enzyme catalyses IMP + diphosphate = hypoxanthine + 5-phospho-alpha-D-ribose 1-diphosphate. It catalyses the reaction GMP + diphosphate = guanine + 5-phospho-alpha-D-ribose 1-diphosphate. It participates in purine metabolism; IMP biosynthesis via salvage pathway; IMP from hypoxanthine: step 1/1. In terms of biological role, catalyzes a salvage reaction resulting in the formation of IMP that is energically less costly than de novo synthesis. This is Hypoxanthine/guanine phosphoribosyltransferase from Methanothermobacter thermautotrophicus (strain ATCC 29096 / DSM 1053 / JCM 10044 / NBRC 100330 / Delta H) (Methanobacterium thermoautotrophicum).